Consider the following 500-residue polypeptide: Chromosomal replication initiator protein DnaA (500 aa).

Residues 1 to 81 (MVNASGDPVI…LQALRTVTGE (81 aa)) form a domain I, interacts with DnaA modulators region. Residues 81-155 (ENMFPAFKVV…QQKMNRDPET (75 aa)) are domain II. The segment at 156–377 (HLNKNFTFDS…GALTRVTAVA (222 aa)) is domain III, AAA+ region. ATP contacts are provided by G200, G202, K203, and T204. Residues 378-500 (SLSNQPVTRA…TVRLKQSNTN (123 aa)) form a domain IV, binds dsDNA region.

This sequence belongs to the DnaA family. Oligomerizes as a right-handed, spiral filament on DNA at oriC.

Its subcellular location is the cytoplasm. Plays an essential role in the initiation and regulation of chromosomal replication. ATP-DnaA binds to the origin of replication (oriC) to initiate formation of the DNA replication initiation complex once per cell cycle. Binds the DnaA box (a 9 base pair repeat at the origin) and separates the double-stranded (ds)DNA. Forms a right-handed helical filament on oriC DNA; dsDNA binds to the exterior of the filament while single-stranded (ss)DNA is stabiized in the filament's interior. The ATP-DnaA-oriC complex binds and stabilizes one strand of the AT-rich DNA unwinding element (DUE), permitting loading of DNA polymerase. After initiation quickly degrades to an ADP-DnaA complex that is not apt for DNA replication. Binds acidic phospholipids. This chain is Chromosomal replication initiator protein DnaA, found in Bifidobacterium longum subsp. infantis (strain ATCC 15697 / DSM 20088 / JCM 1222 / NCTC 11817 / S12).